We begin with the raw amino-acid sequence, 271 residues long: Shikimate dehydrogenase-like protein HI_0607 (271 aa).

The active-site Proton donor/acceptor is lysine 67. Aspartate 103 lines the substrate pocket. NADP(+) is bound by residues 126 to 130 (GSGGM), lysine 154, and serine 184.

This sequence belongs to the shikimate dehydrogenase-like family. As to quaternary structure, homodimer.

The enzyme catalyses shikimate + NADP(+) = 3-dehydroshikimate + NADPH + H(+). In terms of biological role, in vitro, is able to catalyze the NADP(+)-dependent oxidation of shikimate to 3-dehydroshikimate. However, has much lower activity than classical shikimate dehydrogenases AroE, indicating that shikimate may not be the biological substrate. Cannot utilize NAD(+) instead of NADP(+). Is not able to catalyze the oxidation of quinate. In Haemophilus influenzae (strain ATCC 51907 / DSM 11121 / KW20 / Rd), this protein is Shikimate dehydrogenase-like protein HI_0607.